Consider the following 295-residue polypeptide: MLPLTKIWLCYGIFSAILMIFMIVLLSVSKHFTNSFYRVITMDIILNLLCWVNTWPSRMVFREDGFGFARFLYEFYNKSFDVSFFLSNVFFHVQSASTICICCHRLSTAIFDNSNRFWSRFYLLVYALIILYSFLAVQLLYRAPIKFDYELNKFYSEPATLDQRLSVAMYLRCFMSGYLLAIIIIALSTLYQVRKRIAPFDHLHKNLLRKMSLIAFSHTFVFTMLLAWQTLNSFVVYASFIELLMIVSDMISFSMAYILLIFDGNVRSVIKNNLPVIQINGRRISDAQRSQNNIT.

The next 6 helical transmembrane spans lie at 7-27 (IWLC…VLLS), 39-61 (VITM…RMVF), 121-141 (FYLL…QLLY), 173-193 (CFMS…LYQV), 211-230 (MSLI…AWQT), and 241-261 (IELL…ILLI).

The protein belongs to the nematode receptor-like protein srg family.

The protein localises to the membrane. The sequence is that of Serpentine receptor class gamma-53 (srg-53) from Caenorhabditis elegans.